The chain runs to 77 residues: MKSKIMSWLDELPGAAATDFLARRDQIAALMEQAAELTRQAEELRHKAYLQGCTLEGEAKGHWSTQEVERAKARAGW.

To E.coli KleC (kcrB1).

This Escherichia coli protein is Protein KleA (kleA).